Reading from the N-terminus, the 77-residue chain is Metallothionein-like protein type 2 (77 aa).

The protein belongs to the metallothionein superfamily. Type 15 family. In terms of tissue distribution, expressed in the left, stem and flower, at very low levels in roots and is not detectable in mesophyll protoplasts.

Metallothioneins have a high content of cysteine residues that bind various heavy metals. This chain is Metallothionein-like protein type 2 (MTI), found in Vicia faba (Broad bean).